A 260-amino-acid chain; its full sequence is MTKTLTKHLQAIKDSKRGIFVPYIMAGDHAKGLDGLFETITLLENSGVSAIEVGIPWSDPVADGTIIELAGQRSLAKDVTLTAIIKKLQEKKTQVPLVIMTYINPVYQYGIEAFVKDLAETSVKGLIIPDLPNEHADFITPYLRDSDIALVPLVSLTTGIDRQKQLIDGAEGFIYAVAINGVTGKTGNYRDDLDKHLSNLTAYADIPVLTGFGVSTEEDIKRFNAVSDGVIVGSKIVRDLHDGKEEEVAEFVTFGSHFEK.

Catalysis depends on proton acceptor residues Glu-52 and Asp-63.

It belongs to the TrpA family. As to quaternary structure, tetramer of two alpha and two beta chains.

The catalysed reaction is (1S,2R)-1-C-(indol-3-yl)glycerol 3-phosphate + L-serine = D-glyceraldehyde 3-phosphate + L-tryptophan + H2O. Its pathway is amino-acid biosynthesis; L-tryptophan biosynthesis; L-tryptophan from chorismate: step 5/5. The alpha subunit is responsible for the aldol cleavage of indoleglycerol phosphate to indole and glyceraldehyde 3-phosphate. This Streptococcus thermophilus (strain ATCC BAA-491 / LMD-9) protein is Tryptophan synthase alpha chain.